Reading from the N-terminus, the 621-residue chain is Proton pump-interactor BIP131 (621 aa).

Residues 250–305 (IDEVKRDRQAVRDKIKVLEDQIHAVDGEIAALQDDLTAATARKDKAFEALNELRKT) are a coiled coil. Residues 374–387 (SRDGRMRNPDEKPI) show a composition bias toward basic and acidic residues. Positions 374 to 572 (SRDGRMRNPD…RSTVTKTKTP (199 aa)) are disordered. Residues 430–441 (KAPAKAAKAKQP) are compositionally biased toward low complexity. Residues 448 to 516 (PDVHDDEPPK…AEKKLKEKEK (69 aa)) show a composition bias toward basic and acidic residues. Positions 466–524 (EAKLKEMKRQEEIEKNKLALERKKKQAEKQAMKAAARAEKEAEKKLKEKEKKARKRSAT) form a coiled coil. Residues 589–609 (WGAPMAALAAALVALLGALVY) form a helical membrane-spanning segment.

The protein belongs to the plant proton pump-interactor protein family. As to quaternary structure, interacts with BRI1.

It localises to the cell membrane. May regulate plasma membrane ATPase activity. This Oryza sativa subsp. japonica (Rice) protein is Proton pump-interactor BIP131.